A 475-amino-acid chain; its full sequence is Eukaryotic translation initiation factor 3 subunit L (475 aa).

The PCI domain occupies 257–451 (DAIRMFSHIL…DLDYAMQGDL (195 aa)).

Belongs to the eIF-3 subunit L family. As to quaternary structure, component of the eukaryotic translation initiation factor 3 (eIF-3) complex.

It localises to the cytoplasm. Its function is as follows. Component of the eukaryotic translation initiation factor 3 (eIF-3) complex, which is involved in protein synthesis of a specialized repertoire of mRNAs and, together with other initiation factors, stimulates binding of mRNA and methionyl-tRNAi to the 40S ribosome. The eIF-3 complex specifically targets and initiates translation of a subset of mRNAs involved in cell proliferation. The chain is Eukaryotic translation initiation factor 3 subunit L from Sclerotinia sclerotiorum (strain ATCC 18683 / 1980 / Ss-1) (White mold).